A 4158-amino-acid polypeptide reads, in one-letter code: Dynein axonemal heavy chain 6 (4158 aa).

The stem stretch occupies residues 1–1433 (MTFRATDSEF…VARMALSQYT (1433 aa)). Residue 192-199 (IIRENEHL) participates in ATP binding. Positions 805 to 859 (CVHLGSDLEELNNEVNEVKLQAQDPQILDISADQDKIRLILNNLQSVLADLQKRA) form a coiled coil. AAA regions lie at residues 1434 to 1655 (YGYE…VLVM), 1715 to 1948 (STIV…KKCS), 2058 to 2306 (KYNR…CVQG), and 2408 to 2659 (DYNL…LRRR). Residues 1472-1479 (GPAGTGKT), 1753-1760 (GPTGGGKT), 2096-2103 (GITGVGKS), and 2447-2454 (GVGGTGKQ) contribute to the ATP site. Residues 2676 to 2961 (SMLSEKRKQI…KTMALTKARL (286 aa)) are stalk. The stretch at 2901-2996 (KRQKLRAAQA…EEISNITGNV (96 aa)) forms a coiled coil. AAA regions lie at residues 3042-3272 (LGDP…AIKT) and 3509-3730 (LTDF…NLKL).

The protein belongs to the dynein heavy chain family. In terms of assembly, the dynein complex consists of at least two heavy chains and a number of intermediate and light chains. Expressed in several tissues, including brain, pituitary, testis and trachea, with highest levels in testis.

The protein localises to the cytoplasm. It localises to the cytoskeleton. Its subcellular location is the cilium axoneme. In terms of biological role, force generating protein of respiratory cilia. Produces force towards the minus ends of microtubules. Dynein has ATPase activity; the force-producing power stroke is thought to occur on release of ADP. This is Dynein axonemal heavy chain 6 from Homo sapiens (Human).